The sequence spans 267 residues: Beta-lactamase OXA-5 (267 aa).

The signal sequence occupies residues 1-19; it reads MKTIAAYLVLVFYASTALS. S67 functions as the Acyl-ester intermediate in the catalytic mechanism. Residue K70 is modified to N6-carboxylysine. 205 to 207 is a substrate binding site; the sequence is KTG.

The protein belongs to the class-D beta-lactamase family.

The catalysed reaction is a beta-lactam + H2O = a substituted beta-amino acid. Its activity is regulated as follows. Inhibited by clavulanic acid. Hydrolyzes both oxacillin and methicillin. This chain is Beta-lactamase OXA-5 (bla), found in Pseudomonas aeruginosa.